A 446-amino-acid chain; its full sequence is Nuclear distribution protein nudF (446 aa).

Residues 9–41 form the LisH domain; sequence QAEELHKSMVAYLSSIKASQSSNTLREELGIGD. The stretch at 60–86 forms a coiled coil; it reads TGIARLQRKILDLESKITSLQAELDSV. WD repeat units lie at residues 113–154, 156–196, 200–240, 243–282, 285–345, 347–386, 391–430, and 432–446; these read SHRD…RTLK, HMRG…ANIR, GHDH…CVRT, SNSIWFLDVSPSFDGKWLVAGGRDQAVTVWEVSSAEPRAA, GHDN…IKTL, GHDNWIRGLVFHPSGKYLFSVSDDKTIRCWDLSQEGRLVK, AHGHFISCIRWAPPPRNAAAEASETTNGVSKKAPTKPAFQ, and VIATGSADSCVRVFK.

The protein belongs to the WD repeat LIS1/nudF family. Self-associates. Interacts with nudE and dynein.

Its subcellular location is the cytoplasm. It localises to the cytoskeleton. The protein localises to the spindle pole. Positively regulates the activity of the minus-end directed microtubule motor protein dynein. May enhance dynein-mediated microtubule sliding by targeting dynein to the microtubule plus end. Required for nuclear migration during vegetative growth as well as development. Required for retrograde early endosome (EE) transport from the hyphal tip. Required for localization of dynein to the mitotic spindle poles. Recruits additional proteins to the dynein complex at SPBs. The chain is Nuclear distribution protein nudF from Aspergillus terreus (strain NIH 2624 / FGSC A1156).